Reading from the N-terminus, the 544-residue chain is Neurofilament light polypeptide (544 aa).

Ser2 is subject to N-acetylserine. The tract at residues 2–87 (SSYSYDPYYT…KIVRTQEKVQ (86 aa)) is head. In terms of domain architecture, IF rod spans 84–394 (EKVQLQDLND…KLLEGEETRL (311 aa)). Residues 88-119 (LQDLNDRFANFIERVHELEQRNKVLEAELLLL) form a coil 1A region. Positions 120-132 (RQKHNEPSRLRDM) are linker 1. Residues 133–228 (YEKEVRDVRL…KVHEEELSQL (96 aa)) are coil 1B. Residues 229–246 (QSQVQYAQVSLEVEVAKP) are linker 12. The tract at residues 247–265 (DLSSALRDIRGQYEKLAAK) is coil 2A. A linker 2 region spans residues 266–274 (NMQSAEEWF). The segment at 275 to 390 (KSRFTVLTQS…AAYRKLLEGE (116 aa)) is coil 2B. A tail, subdomain A region spans residues 391–435 (ETRLSFSGVGAITSGYTQSAPVFGRSAYSLQSSSYMTSRAFPTYY). The tail stretch occupies residues 391 to 544 (ETRLSFSGVG…EESEKKEKKK (154 aa)). Positions 436 to 544 (SSHVQEEQLD…EESEKKEKKK (109 aa)) are tail, subdomain B (acidic). The disordered stretch occupies residues 450 to 544 (IESSRAEEAK…EESEKKEKKK (95 aa)). The segment covering 451-462 (ESSRAEEAKAEA) has biased composition (basic and acidic residues). The span at 463-525 (PEEEEEEAAE…EAEGDGEEEG (63 aa)) shows a compositional bias: acidic residues. A compositionally biased stretch (basic and acidic residues) spans 526 to 544 (ESKGDEAAEEESEKKEKKK).

It belongs to the intermediate filament family. Forms homodimers (in vitro).

It is found in the cell projection. The protein localises to the axon. The protein resides in the cytoplasm. Its subcellular location is the cytoskeleton. Neurofilaments usually contain three intermediate filament proteins: NEFL, NEFM, and NEFH which are involved in the maintenance of neuronal caliber. May additionally cooperate with other neuronal intermediate filament proteins to form neuronal filamentous networks. This is Neurofilament light polypeptide (nefl) from Xenopus laevis (African clawed frog).